Consider the following 247-residue polypeptide: tRNA pseudouridine synthase A (247 aa).

The active-site Nucleophile is D53. A substrate-binding site is contributed by Y112.

It belongs to the tRNA pseudouridine synthase TruA family. In terms of assembly, homodimer.

The catalysed reaction is uridine(38/39/40) in tRNA = pseudouridine(38/39/40) in tRNA. Formation of pseudouridine at positions 38, 39 and 40 in the anticodon stem and loop of transfer RNAs. This chain is tRNA pseudouridine synthase A, found in Anaplasma marginale (strain Florida).